A 233-amino-acid polypeptide reads, in one-letter code: Orotidine 5'-phosphate decarboxylase (233 aa).

Substrate-binding positions include Asp11, Lys34, 61-70 (DLKLHDIPNT), Thr117, Arg179, Gln189, Gly209, and Arg210. The active-site Proton donor is the Lys63.

The protein belongs to the OMP decarboxylase family. Type 1 subfamily. In terms of assembly, homodimer.

It carries out the reaction orotidine 5'-phosphate + H(+) = UMP + CO2. It participates in pyrimidine metabolism; UMP biosynthesis via de novo pathway; UMP from orotate: step 2/2. Catalyzes the decarboxylation of orotidine 5'-monophosphate (OMP) to uridine 5'-monophosphate (UMP). In Streptococcus agalactiae serotype V (strain ATCC BAA-611 / 2603 V/R), this protein is Orotidine 5'-phosphate decarboxylase.